Consider the following 599-residue polypeptide: Kinesin light chain 2 (599 aa).

Positions 78 to 143 form a coiled coil; the sequence is ILALSSHLGA…KQHLLFMSQI (66 aa). Residues 154–163 show a composition bias toward basic and acidic residues; sequence EKGDVPKDSL. The interval 154-188 is disordered; that stretch reads EKGDVPKDSLDDLFPNEDEQSPAPSPGGGDVAAQH. Phosphoserine is present on residues serine 174 and serine 178. TPR repeat units lie at residues 197–230, 239–272, 281–314, 323–356, and 365–398; these read LRTLHNLVIQYASQGRYEVAVPLCKQALEDLEKT, ATMLNILALVYRDQNKYKDAAHLLNDALAIREKT, AATLNNLAVLYGKRGKYKEAEPLCKRALEIREKV, AKQLSNLALLCQNQGKAEEVEYYYRRALEIYATR, and AKTKNNLASCYLKQGKYQDAETLYKEILTRAHEK. Serine 443 carries the post-translational modification Phosphoserine. One copy of the TPR 6 repeat lies at 447–480; that stretch reads NTTLRTLGALYRPEGKLEAAHTLEDCASRSRKQG. The tract at residues 492 to 541 is disordered; that stretch reads LLKDGSGRGHRRGSRDVAGPQSESDLEESGPAAEWSGDGSGSLRRSGSFG. Serine 505 and serine 515 each carry phosphoserine. A compositionally biased stretch (low complexity) spans 532–541; the sequence is GSLRRSGSFG. Phosphoserine occurs at positions 574, 575, and 582.

Belongs to the kinesin light chain family. Oligomeric complex composed of two heavy chains and two light chains. Interacts (via TPR repeats) with PLEKHM2.

The protein localises to the cytoplasm. It is found in the cytoskeleton. Its subcellular location is the lysosome membrane. Functionally, kinesin is a microtubule-associated force-producing protein that plays a role in organelle transport. The light chain functions in coupling of cargo to the heavy chain or in the modulation of its ATPase activity. Through binding with PLEKHM2 and ARL8B, recruits kinesin-1 to lysosomes and hence direct lysosomes movement toward microtubule plus ends. The polypeptide is Kinesin light chain 2 (Mus musculus (Mouse)).